The following is a 145-amino-acid chain: Large ribosomal subunit protein bL17 (145 aa).

The protein belongs to the bacterial ribosomal protein bL17 family. In terms of assembly, part of the 50S ribosomal subunit. Contacts protein L32.

The sequence is that of Large ribosomal subunit protein bL17 from Francisella tularensis subsp. tularensis (strain FSC 198).